The sequence spans 238 residues: UPF0280 protein Mboo_1274 (238 aa).

The protein belongs to the UPF0280 family.

The sequence is that of UPF0280 protein Mboo_1274 from Methanoregula boonei (strain DSM 21154 / JCM 14090 / 6A8).